The primary structure comprises 255 residues: tRNA uridine(34) hydroxylase (255 aa).

The region spanning 125–219 (AAPDTLLIDT…YLEGIPESES (95 aa)) is the Rhodanese domain. Catalysis depends on cysteine 179, which acts as the Cysteine persulfide intermediate.

This sequence belongs to the TrhO family.

The enzyme catalyses uridine(34) in tRNA + AH2 + O2 = 5-hydroxyuridine(34) in tRNA + A + H2O. In terms of biological role, catalyzes oxygen-dependent 5-hydroxyuridine (ho5U) modification at position 34 in tRNAs. The sequence is that of tRNA uridine(34) hydroxylase from Nitrobacter hamburgensis (strain DSM 10229 / NCIMB 13809 / X14).